The following is a 364-amino-acid chain: Coproporphyrin III ferrochelatase (364 aa).

Residues arginine 29 and tyrosine 118 each contribute to the Fe-coproporphyrin III site. Residues histidine 169 and glutamate 250 each coordinate Fe(2+).

It belongs to the ferrochelatase family.

It localises to the cytoplasm. The catalysed reaction is Fe-coproporphyrin III + 2 H(+) = coproporphyrin III + Fe(2+). The protein operates within porphyrin-containing compound metabolism; protoheme biosynthesis. Its function is as follows. Involved in coproporphyrin-dependent heme b biosynthesis. Catalyzes the insertion of ferrous iron into coproporphyrin III to form Fe-coproporphyrin III. The sequence is that of Coproporphyrin III ferrochelatase from Streptococcus pneumoniae serotype 4 (strain ATCC BAA-334 / TIGR4).